A 392-amino-acid polypeptide reads, in one-letter code: tRNA-specific 2-thiouridylase MnmA (392 aa).

Residues 18-25 (AMSGGVDS) and L44 contribute to the ATP site. C112 functions as the Nucleophile in the catalytic mechanism. A disulfide bridge links C112 with C208. G136 is a binding site for ATP. Residues 158–160 (RDQ) form an interaction with tRNA region. Catalysis depends on C208, which acts as the Cysteine persulfide intermediate.

The protein belongs to the MnmA/TRMU family.

The protein resides in the cytoplasm. The catalysed reaction is S-sulfanyl-L-cysteinyl-[protein] + uridine(34) in tRNA + AH2 + ATP = 2-thiouridine(34) in tRNA + L-cysteinyl-[protein] + A + AMP + diphosphate + H(+). In terms of biological role, catalyzes the 2-thiolation of uridine at the wobble position (U34) of tRNA, leading to the formation of s(2)U34. In Rhodospirillum centenum (strain ATCC 51521 / SW), this protein is tRNA-specific 2-thiouridylase MnmA.